The primary structure comprises 80 residues: Acyl carrier protein (80 aa).

Residues 4 to 79 (EEIKDKVFDI…QAIDYIVNAK (76 aa)) form the Carrier domain. The residue at position 39 (serine 39) is an O-(pantetheine 4'-phosphoryl)serine.

It belongs to the acyl carrier protein (ACP) family. Post-translationally, 4'-phosphopantetheine is transferred from CoA to a specific serine of apo-ACP by AcpS. This modification is essential for activity because fatty acids are bound in thioester linkage to the sulfhydryl of the prosthetic group.

The protein localises to the cytoplasm. The protein operates within lipid metabolism; fatty acid biosynthesis. Carrier of the growing fatty acid chain in fatty acid biosynthesis. The chain is Acyl carrier protein from Prosthecochloris aestuarii (strain DSM 271 / SK 413).